Here is a 280-residue protein sequence, read N- to C-terminus: Putative pyruvate, phosphate dikinase regulatory protein (280 aa).

153 to 160 (GISRTSKT) lines the ADP pocket.

This sequence belongs to the pyruvate, phosphate/water dikinase regulatory protein family. PDRP subfamily.

It carries out the reaction N(tele)-phospho-L-histidyl/L-threonyl-[pyruvate, phosphate dikinase] + ADP = N(tele)-phospho-L-histidyl/O-phospho-L-threonyl-[pyruvate, phosphate dikinase] + AMP + H(+). The enzyme catalyses N(tele)-phospho-L-histidyl/O-phospho-L-threonyl-[pyruvate, phosphate dikinase] + phosphate + H(+) = N(tele)-phospho-L-histidyl/L-threonyl-[pyruvate, phosphate dikinase] + diphosphate. Its function is as follows. Bifunctional serine/threonine kinase and phosphorylase involved in the regulation of the pyruvate, phosphate dikinase (PPDK) by catalyzing its phosphorylation/dephosphorylation. This is Putative pyruvate, phosphate dikinase regulatory protein from Bartonella quintana (strain Toulouse) (Rochalimaea quintana).